Here is a 311-residue protein sequence, read N- to C-terminus: Quinolinate synthase (311 aa).

His25 and Ser42 together coordinate iminosuccinate. Cys87 is a binding site for [4Fe-4S] cluster. Residues 113-115 and Ser130 contribute to the iminosuccinate site; that span reads YIN. Cys175 is a binding site for [4Fe-4S] cluster. Iminosuccinate-binding positions include 201–203 and Thr218; that span reads HPE. Cys268 is a binding site for [4Fe-4S] cluster.

It belongs to the quinolinate synthase family. Type 2 subfamily. Requires [4Fe-4S] cluster as cofactor.

It is found in the cytoplasm. The enzyme catalyses iminosuccinate + dihydroxyacetone phosphate = quinolinate + phosphate + 2 H2O + H(+). It functions in the pathway cofactor biosynthesis; NAD(+) biosynthesis; quinolinate from iminoaspartate: step 1/1. Functionally, catalyzes the condensation of iminoaspartate with dihydroxyacetone phosphate to form quinolinate. This Saccharolobus solfataricus (strain ATCC 35092 / DSM 1617 / JCM 11322 / P2) (Sulfolobus solfataricus) protein is Quinolinate synthase.